The sequence spans 1131 residues: ATP-dependent helicase FUN30 (1131 aa).

The interval 1–70 (MSGSHSNDED…HTSKPLPSGS (70 aa)) is disordered. Polar residues predominate over residues 16–36 (PETSSPTKVASSSPLKPTSPT). Residues 76 to 111 (VNLAREFPDFSQTLVQAVFKSNSFNLQSARERLTRL) form a CUE-like region region. A disordered region spans residues 114–141 (QRQNWTWNKNASPKKSETPPPVKKSLPL). S232 carries the phosphoserine modification. Disordered stretches follow at residues 242 to 273 (KYGRHANDNDEEEEESMMTDDDDASGDDYTES) and 327 to 350 (NDKDTEENASNKRKRRAAASANES). A compositionally biased stretch (acidic residues) spans 250–271 (NDEEEEESMMTDDDDASGDDYT). At S369 the chain carries Phosphoserine. The segment at 400-533 (DLMNLGEDDD…GDDDDDDDDE (134 aa)) is disordered. A compositionally biased stretch (acidic residues) spans 405–416 (GEDDDDDNDDGN). The segment covering 417–432 (NDNNNSNNNNTAGADA) has biased composition (low complexity). A compositionally biased stretch (basic and acidic residues) spans 433-442 (TSKEKEDTKA). Residue S451 is modified to Phosphoserine. The span at 480 to 533 (EDEDDDVDLEAIDDELPQSEHEDDDYEEEDEDYNDEEEDVEYDDGDDDDDDDDE) shows a compositional bias: acidic residues. In terms of domain architecture, Helicase ATP-binding spans 584–752 (NLLYQNKMSC…MSLLEFIMPN (169 aa)). Residue 597–604 (DDMGLGKT) participates in ATP binding. Positions 703–706 (DEGH) match the DEGH box motif. Residues 953 to 1108 (ALKKLLKTII…EDKKSQDVLE (156 aa)) enclose the Helicase C-terminal domain.

The protein belongs to the SNF2/RAD54 helicase family. In terms of assembly, homodimer.

It is found in the nucleus. The protein resides in the chromosome. It carries out the reaction ATP + H2O = ADP + phosphate + H(+). DNA helicase that possesses intrinsic ATP-dependent nucleosome-remodeling activity and is both required for DNA repair and heterochromatin organization. Promotes DNA end resection of double-strand breaks (DSBs) following DNA damage: probably acts by weakening histone DNA interactions in nucleosomes flanking DSBs, facilitating single-stranded DNA (ssDNA) production by the EXO1 and SGS1 machinery. Promotes gene silencing at heterochromatin by regulating the chromatin structure within or around silent loci. Also required for heterochromatin organization at centromeres. This is ATP-dependent helicase FUN30 (FUN30) from Saccharomyces cerevisiae (strain ATCC 204508 / S288c) (Baker's yeast).